Here is a 249-residue protein sequence, read N- to C-terminus: Proteasome activator complex subunit 1 (249 aa).

Residues 55–102 (SNLKAPLDIPVPDPVKEKEKEERRKQQEKEDKDEKKKGEDEDKGPPCG) are disordered. Positions 68–98 (PVKEKEKEERRKQQEKEDKDEKKKGEDEDKG) are enriched in basic and acidic residues.

The protein belongs to the PA28 family. In terms of assembly, heterodimer of PSME1 and PSME2, which forms a hexameric ring. PSME1 can form homoheptamers.

In terms of biological role, implicated in immunoproteasome assembly and required for efficient antigen processing. The PA28 activator complex enhances the generation of class I binding peptides by altering the cleavage pattern of the proteasome. This Bos taurus (Bovine) protein is Proteasome activator complex subunit 1 (PSME1).